Reading from the N-terminus, the 278-residue chain is 3-methyl-2-oxobutanoate hydroxymethyltransferase (278 aa).

2 residues coordinate Mg(2+): D44 and D83. 3-methyl-2-oxobutanoate is bound by residues D44–S45, D83, and K112. E114 serves as a coordination point for Mg(2+). The active-site Proton acceptor is the E181.

This sequence belongs to the PanB family. Homodecamer; pentamer of dimers. Requires Mg(2+) as cofactor.

The protein localises to the cytoplasm. It carries out the reaction 3-methyl-2-oxobutanoate + (6R)-5,10-methylene-5,6,7,8-tetrahydrofolate + H2O = 2-dehydropantoate + (6S)-5,6,7,8-tetrahydrofolate. It functions in the pathway cofactor biosynthesis; (R)-pantothenate biosynthesis; (R)-pantoate from 3-methyl-2-oxobutanoate: step 1/2. Functionally, catalyzes the reversible reaction in which hydroxymethyl group from 5,10-methylenetetrahydrofolate is transferred onto alpha-ketoisovalerate to form ketopantoate. The chain is 3-methyl-2-oxobutanoate hydroxymethyltransferase from Roseiflexus sp. (strain RS-1).